A 67-amino-acid polypeptide reads, in one-letter code: Conotoxin TxMMSK-01 (67 aa).

The signal sequence occupies residues 1-20; sequence MMSKLGVLLITCLLLFPLTA. A propeptide spanning residues 21-53 is cleaved from the precursor; sequence VPLDGDQPADQPAERLQDDISSENHPFFDPVKR. 3 disulfide bridges follow: Cys-54–Cys-66, Cys-55–Cys-62, and Cys-59–Cys-65. Position 64 is a 4-hydroxyproline (Pro-64). Cysteine amide is present on Cys-66.

Belongs to the conotoxin M superfamily. In terms of tissue distribution, expressed by the venom duct.

The protein resides in the secreted. This is Conotoxin TxMMSK-01 from Conus textile (Cloth-of-gold cone).